The following is a 2090-amino-acid chain: Nuclear pore complex protein Nup214 (2090 aa).

Gly2 is modified (N-acetylglycine). The residue at position 30 (Ser30) is a Phosphoserine. Blade repeat units lie at residues 41–93 (LLAV…PMKF), 94–150 (PIHH…DAGG), 151–193 (MVID…PSTV), 194–239 (AVTS…ESDH), 240–303 (PVRV…ERQH), 304–359 (HYYL…KSDD), and 360–404 (SLPM…FYMI). The seven-bladed beta propeller stretch occupies residues 41–404 (LLAVSNKYGL…DGVLCPFYMI (364 aa)). The interval 236–1418 (ESDHPVRVLD…AVFGSLPVTS (1183 aa)) is 44 X 2 AA repeats of F-G. A Phosphothreonine modification is found at Thr416. Phosphoserine occurs at positions 421, 430, and 433. The interval 422 to 460 (LEGERQPKSPGSTPTTPTSSQAPQKLDASAAAAPASLPP) is disordered. Low complexity predominate over residues 429–441 (KSPGSTPTTPTSS). Thr434, Thr437, and Thr439 each carry phosphothreonine. The interval 450–586 (SAAAAPASLP…PPSTSAVKVN (137 aa)) is (Microbial infection) Binds human adenovirus 5 (HAdV-5) protein L3 (hexon). An 11 X 5 AA approximate repeats region spans residues 481–2076 (VFSFGSSSLK…GSGTGGFSFG (1596 aa)). Copy 1 of the repeat occupies 484 to 485 (FG). 2 stretches are compositionally biased toward low complexity: residues 489–513 (LKSS…KAAP) and 524–536 (PPSK…TPAA). The tract at residues 489–536 (LKSSATVTGEPPSYSSGSDSSKAAPGPGPSTFSFVPPSKASLAPTPAA) is disordered. Copy 2 of the repeat occupies 548 to 549 (FG). Low complexity-rich tracts occupy residues 597 to 629 (STPV…HPTP) and 637 to 658 (VPLK…SSSP). The interval 597–700 (STPVSSSQSA…KQGHQWKDSD (104 aa)) is disordered. Phosphoserine is present on residues Ser651, Ser657, and Ser666. Thr670 carries the phosphothreonine modification. The residue at position 678 (Ser678) is a Phosphoserine. Residues 680 to 1209 (QAKSLQPAVA…VTSTPSASGQ (530 aa)) adopt a coiled-coil conformation. Over residues 691–700 (KQGHQWKDSD) the composition is skewed to basic and acidic residues. Leucine-zipper regions lie at residues 740-768 (LRTE…ISSL) and 861-882 (LANN…VDSL). The residue at position 760 (Ser760) is a Phosphoserine. Ser940, Ser970, Ser974, and Ser989 each carry phosphoserine. The tract at residues 987-1009 (TSSVSQSLESEDARTSCKDDEAV) is disordered. The span at 997 to 1007 (EDARTSCKDDE) shows a compositional bias: basic and acidic residues. At Thr1021 the chain carries Phosphothreonine. Phosphoserine is present on residues Ser1023, Ser1045, Ser1056, and Ser1081. Over residues 1128–1149 (LKNNPATPSTAMGSSVPYSTAK) the composition is skewed to polar residues. Residues 1128 to 1152 (LKNNPATPSTAMGSSVPYSTAKTPH) form a disordered region. Phosphothreonine is present on residues Thr1134, Thr1150, and Thr1156. 2 stretches are compositionally biased toward polar residues: residues 1168–1188 (LINS…SSGD) and 1199–1213 (AVTS…FSKP). The disordered stretch occupies residues 1168–1213 (LINSLKPSGPTPASGQLSSGDKASGTAKIETAVTSTPSASGQFSKP). Ser1181 bears the Phosphoserine mark. Copy 3 of the repeat occupies 1225 to 1226 (FG). Composition is skewed to polar residues over residues 1234–1254 (SNFT…QPDA) and 1273–1285 (PPSG…NTTP). Disordered regions lie at residues 1234–1316 (SNFT…PPSK) and 1337–1408 (LRVG…TSST). Low complexity predominate over residues 1288 to 1299 (PAASSSRPVAPS). Residues 1301–1310 (TALSTTSSKL) show a composition bias toward polar residues. Thr1312 is subject to Phosphothreonine. A compositionally biased stretch (polar residues) spans 1347 to 1368 (KPTNKASSTSLTSTQPTKTSGV). Residue Ser1353 is modified to Phosphoserine. The segment covering 1386–1408 (PPVTSSATTTSVAPPAATSTSST) has biased composition (low complexity). An 18 X 4 AA approximate repeats region spans residues 1409–2084 (AVFGSLPVTS…FGSNNSSVQG (676 aa)). Repeat copies occupy residues 1411–1412 (FG), 1427–1428 (FG), 1441–1442 (FG), and 1473–1474 (FG). The interval 1427-2085 (FGGTSLSAGK…GSNNSSVQGF (659 aa)) is 11 X 3 AA approximate repeats. The span at 1438–1450 (SFSFGSQQTNSTV) shows a compositional bias: polar residues. The tract at residues 1438–1467 (SFSFGSQQTNSTVPPSAPPPTTAATPLPTS) is disordered. Low complexity-rich tracts occupy residues 1479–1489 (SATTPSLPMSA) and 1508–1527 (SEVS…AQLP). Positions 1479-1539 (SATTPSLPMS…PPQTSDSVKK (61 aa)) are disordered. Residue Lys1538 forms a Glycyl lysine isopeptide (Lys-Gly) (interchain with G-Cter in SUMO2) linkage. 18 tandem repeats follow at residues 1635–1636 (FG), 1674–1675 (FG), 1686–1687 (FG), 1713–1714 (FG), 1721–1722 (FG), 1726–1727 (FG), 1732–1733 (FG), 1756–1757 (FG), 1772–1773 (FG), 1786–1787 (FG), 1798–1799 (FG), 1806–1807 (FG), 1812–1813 (FG), 1819–1820 (FG), 1842–1843 (FG), 1851–1852 (FG), 1862–1863 (FG), and 1874–1875 (FG). A disordered region spans residues 1884 to 1903 (GFFSGLGGKPSQDAANKNPF). Repeat copies occupy residues 1910-1911 (FG), 1922-1923 (FG), 1930-1931 (FG), 1938-1939 (FG), and 1959-1960 (FG). Ser1963 carries the phosphoserine modification. A run of 3 repeats spans residues 1970–1971 (FG), 1976–1977 (FG), and 1982–1983 (FG). Ser1985 carries the post-translational modification Phosphoserine. 11 repeat units span residues 1988–1989 (FG), 1994–1995 (FG), 2012–2013 (FG), 2024–2025 (FG), 2026–2027 (FG), 2035–2036 (FG), 2046–2047 (FG), 2056–2057 (FG), 2066–2067 (FG), 2075–2076 (FG), and 2085–2086 (FG).

Homodimer. Part of the nuclear pore complex (NPC). Interacts with NUP88. Interacts with ZFP36; this interaction increases upon lipopolysaccharide (LPS) stimulation. Interacts with DDX19. Interacts with XPO1. Interacts with XPO5. In terms of assembly, (Microbial infection) Interacts with human herpes virus 1 (HHV-1) protein UL25; this interaction might be essential to the capsid docking onto the host nuclear pore. As to quaternary structure, (Microbial infection) Interacts (via N-terminus) with human adenovirus 5 (HAdV-5) protein L3 (hexon); this interaction might be essential for the release of the virus genome to the nucleus. Probably glycosylated as it reacts with wheat germ agglutinin (WGA). As to expression, expressed in thymus, spleen, bone marrow, kidney, brain and testis, but hardly in all other tissues or in whole embryos during development.

Its subcellular location is the nucleus. The protein localises to the nuclear pore complex. Part of the nuclear pore complex. Has a critical role in nucleocytoplasmic transport. May serve as a docking site in the receptor-mediated import of substrates across the nuclear pore complex. Its function is as follows. (Microbial infection) Required for capsid disassembly of the human adenovirus 5 (HadV-5) leading to release of the viral genome to the nucleus (in vitro). The sequence is that of Nuclear pore complex protein Nup214 (NUP214) from Homo sapiens (Human).